A 272-amino-acid polypeptide reads, in one-letter code: Undecaprenyl-diphosphatase (272 aa).

The next 8 membrane-spanning stretches (helical) occupy residues 4–24, 43–63, 86–106, 109–129, 145–165, 186–206, 222–242, and 249–269; these read FEVI…FLPI, GGRV…CWLY, ISVL…VDFI, VLFS…IIFW, ITFK…IPGT, TEFS…FDLI, VGFV…VLFV, and VFAW…MFFN.

Belongs to the UppP family.

Its subcellular location is the cell inner membrane. It carries out the reaction di-trans,octa-cis-undecaprenyl diphosphate + H2O = di-trans,octa-cis-undecaprenyl phosphate + phosphate + H(+). Its function is as follows. Catalyzes the dephosphorylation of undecaprenyl diphosphate (UPP). Confers resistance to bacitracin. The protein is Undecaprenyl-diphosphatase of Acinetobacter baumannii (strain SDF).